The following is a 495-amino-acid chain: Putative aldehyde dehydrogenase AldA (495 aa).

Position 212–218 (212–218) interacts with NAD(+); that stretch reads GKGSESG. Catalysis depends on residues Glu256 and Cys290.

It belongs to the aldehyde dehydrogenase family.

The catalysed reaction is an aldehyde + NAD(+) + H2O = a carboxylate + NADH + 2 H(+). This is Putative aldehyde dehydrogenase AldA (aldA) from Staphylococcus aureus (strain MSSA476).